The chain runs to 352 residues: Holliday junction branch migration complex subunit RuvB (352 aa).

Positions 1–181 are large ATPase domain (RuvB-L); it reads MTDRIVGAAK…FGIPVRLHFY (181 aa). Residues leucine 20, arginine 21, glycine 62, lysine 65, threonine 66, threonine 67, 128 to 130, arginine 171, tyrosine 181, and arginine 218 each bind ATP; that span reads EDF. Threonine 66 is a Mg(2+) binding site. The interval 182–252 is small ATPAse domain (RuvB-S); it reads EVAELEGIVR…AADKALQRLE (71 aa). Residues 255-352 are head domain (RuvB-H); it reads ELGLDALDHR…FDGDEENGSA (98 aa). DNA is bound by residues arginine 291, arginine 310, and arginine 315.

This sequence belongs to the RuvB family. As to quaternary structure, homohexamer. Forms an RuvA(8)-RuvB(12)-Holliday junction (HJ) complex. HJ DNA is sandwiched between 2 RuvA tetramers; dsDNA enters through RuvA and exits via RuvB. An RuvB hexamer assembles on each DNA strand where it exits the tetramer. Each RuvB hexamer is contacted by two RuvA subunits (via domain III) on 2 adjacent RuvB subunits; this complex drives branch migration. In the full resolvosome a probable DNA-RuvA(4)-RuvB(12)-RuvC(2) complex forms which resolves the HJ.

The protein resides in the cytoplasm. The enzyme catalyses ATP + H2O = ADP + phosphate + H(+). In terms of biological role, the RuvA-RuvB-RuvC complex processes Holliday junction (HJ) DNA during genetic recombination and DNA repair, while the RuvA-RuvB complex plays an important role in the rescue of blocked DNA replication forks via replication fork reversal (RFR). RuvA specifically binds to HJ cruciform DNA, conferring on it an open structure. The RuvB hexamer acts as an ATP-dependent pump, pulling dsDNA into and through the RuvAB complex. RuvB forms 2 homohexamers on either side of HJ DNA bound by 1 or 2 RuvA tetramers; 4 subunits per hexamer contact DNA at a time. Coordinated motions by a converter formed by DNA-disengaged RuvB subunits stimulates ATP hydrolysis and nucleotide exchange. Immobilization of the converter enables RuvB to convert the ATP-contained energy into a lever motion, pulling 2 nucleotides of DNA out of the RuvA tetramer per ATP hydrolyzed, thus driving DNA branch migration. The RuvB motors rotate together with the DNA substrate, which together with the progressing nucleotide cycle form the mechanistic basis for DNA recombination by continuous HJ branch migration. Branch migration allows RuvC to scan DNA until it finds its consensus sequence, where it cleaves and resolves cruciform DNA. This chain is Holliday junction branch migration complex subunit RuvB, found in Parvibaculum lavamentivorans (strain DS-1 / DSM 13023 / NCIMB 13966).